A 230-amino-acid polypeptide reads, in one-letter code: MIFHKNIVKAEFIRRPNRFQAYVKLNGSEVMVHVPNTGRCREILLPETTILLREENGINRKTKYDLIAGYKENKLINIDSQIPNKVVEEALENRKISYFTKYNKIEREKTFGNSRFDFKLSGDENLKCYVEVKGVTLEKEGVAMFPDAPTERGRKHLLELIEVKKSGMDAAVLFLIQMKDVKYFRPHDEMDKKFGEALRHAKENYVQVVAYDCDVGENFIILRDEIKVQL.

This sequence belongs to the SfsA family.

The sequence is that of Sugar fermentation stimulation protein homolog from Clostridium kluyveri (strain NBRC 12016).